A 420-amino-acid chain; its full sequence is Histidine--tRNA ligase (420 aa).

Belongs to the class-II aminoacyl-tRNA synthetase family. As to quaternary structure, homodimer.

It localises to the cytoplasm. The enzyme catalyses tRNA(His) + L-histidine + ATP = L-histidyl-tRNA(His) + AMP + diphosphate + H(+). In Thermotoga petrophila (strain ATCC BAA-488 / DSM 13995 / JCM 10881 / RKU-1), this protein is Histidine--tRNA ligase.